A 219-amino-acid chain; its full sequence is Small ribosomal subunit protein uS3 (219 aa).

Residues 38–107 form the KH type-2 domain; that stretch reads IREYIENKMK…RVHINVVEVK (70 aa).

Belongs to the universal ribosomal protein uS3 family. As to quaternary structure, part of the 30S ribosomal subunit. Forms a tight complex with proteins S10 and S14.

Binds the lower part of the 30S subunit head. Binds mRNA in the 70S ribosome, positioning it for translation. The sequence is that of Small ribosomal subunit protein uS3 from Exiguobacterium sp. (strain ATCC BAA-1283 / AT1b).